The primary structure comprises 123 residues: Cytochrome b-c1 complex subunit 7 (123 aa).

Belongs to the UQCRB/QCR7 family. As to quaternary structure, component of the ubiquinol-cytochrome c oxidoreductase (cytochrome b-c1 complex, complex III, CIII), a multisubunit enzyme composed of 3 respiratory subunits cytochrome b, cytochrome c1 and Rieske protein, 2 core protein subunits, and additional low-molecular weight protein subunits. The complex exists as an obligatory dimer and forms supercomplexes (SCs) in the inner mitochondrial membrane with cytochrome c oxidase (complex IV, CIV). Post-translationally, the N-terminus is blocked.

It is found in the mitochondrion inner membrane. Functionally, component of the ubiquinol-cytochrome c oxidoreductase, a multisubunit transmembrane complex that is part of the mitochondrial electron transport chain which drives oxidative phosphorylation. The respiratory chain contains 3 multisubunit complexes succinate dehydrogenase (complex II, CII), ubiquinol-cytochrome c oxidoreductase (cytochrome b-c1 complex, complex III, CIII) and cytochrome c oxidase (complex IV, CIV), that cooperate to transfer electrons derived from NADH and succinate to molecular oxygen, creating an electrochemical gradient over the inner membrane that drives transmembrane transport and the ATP synthase. The cytochrome b-c1 complex catalyzes electron transfer from ubiquinol to cytochrome c, linking this redox reaction to translocation of protons across the mitochondrial inner membrane, with protons being carried across the membrane as hydrogens on the quinol. In the process called Q cycle, 2 protons are consumed from the matrix, 4 protons are released into the intermembrane space and 2 electrons are passed to cytochrome c. The protein is Cytochrome b-c1 complex subunit 7 of Solanum tuberosum (Potato).